Consider the following 257-residue polypeptide: Imidazole glycerol phosphate synthase subunit HisF (257 aa).

Catalysis depends on residues Asp11 and Asp130.

The protein belongs to the HisA/HisF family. Heterodimer of HisH and HisF.

The protein resides in the cytoplasm. The enzyme catalyses 5-[(5-phospho-1-deoxy-D-ribulos-1-ylimino)methylamino]-1-(5-phospho-beta-D-ribosyl)imidazole-4-carboxamide + L-glutamine = D-erythro-1-(imidazol-4-yl)glycerol 3-phosphate + 5-amino-1-(5-phospho-beta-D-ribosyl)imidazole-4-carboxamide + L-glutamate + H(+). It participates in amino-acid biosynthesis; L-histidine biosynthesis; L-histidine from 5-phospho-alpha-D-ribose 1-diphosphate: step 5/9. In terms of biological role, IGPS catalyzes the conversion of PRFAR and glutamine to IGP, AICAR and glutamate. The HisF subunit catalyzes the cyclization activity that produces IGP and AICAR from PRFAR using the ammonia provided by the HisH subunit. The chain is Imidazole glycerol phosphate synthase subunit HisF from Tolumonas auensis (strain DSM 9187 / NBRC 110442 / TA 4).